An 875-amino-acid chain; its full sequence is Alanine--tRNA ligase (875 aa).

Positions 596, 600, 700, and 704 each coordinate Zn(2+).

Belongs to the class-II aminoacyl-tRNA synthetase family. Zn(2+) serves as cofactor.

It localises to the cytoplasm. It catalyses the reaction tRNA(Ala) + L-alanine + ATP = L-alanyl-tRNA(Ala) + AMP + diphosphate. In terms of biological role, catalyzes the attachment of alanine to tRNA(Ala) in a two-step reaction: alanine is first activated by ATP to form Ala-AMP and then transferred to the acceptor end of tRNA(Ala). Also edits incorrectly charged Ser-tRNA(Ala) and Gly-tRNA(Ala) via its editing domain. The polypeptide is Alanine--tRNA ligase (Methanocella arvoryzae (strain DSM 22066 / NBRC 105507 / MRE50)).